A 537-amino-acid chain; its full sequence is Frizzled-4 (537 aa).

An N-terminal signal peptide occupies residues 1–36 (MAWPGTGPSSRGAPGGVGLRLGLLLQFLLLLRPTLG). The Extracellular segment spans residues 37 to 212 (FGDEEERRCD…KCGYDAGLYS (176 aa)). The region spanning 40 to 161 (EEERRCDPIR…NDHNHMCMEG (122 aa)) is the FZ domain. Disulfide bonds link cysteine 45–cysteine 106, cysteine 53–cysteine 99, cysteine 90–cysteine 128, cysteine 117–cysteine 158, cysteine 121–cysteine 145, cysteine 181–cysteine 200, cysteine 204–cysteine 282, and cysteine 302–cysteine 377. A glycan (N-linked (GlcNAc...) asparagine) is linked at asparagine 59. N-linked (GlcNAc...) asparagine glycosylation is present at asparagine 144. A helical transmembrane segment spans residues 213–243 (RSAKEFTDIWMAVWASLCFISTTFTVLTFLI). The Cytoplasmic segment spans residues 244–249 (DSSRFS). The helical transmembrane segment at 250–275 (YPERPIIFLSMCYNIYSIAYIVRLTV) threads the bilayer. Over 276-299 (GRERISCDFEEAAEPVLIQEGLKN) the chain is Extracellular. Residues 300 to 333 (TGCAIIFLLMYFFGMASSIWWVILTLTWFLAAGL) form a helical membrane-spanning segment. Residues 334-336 (KWG) lie on the Cytoplasmic side of the membrane. A helical membrane pass occupies residues 337–365 (HEAIEMHSSYFHIAAWAIPAVKTIVILIM). The Extracellular segment spans residues 366–383 (RLVDADELTGLCYVGNQN). The helical transmembrane segment at 384–410 (LDALTGFVVAPLFTYLVIGTLFIAAGL) threads the bilayer. At 411 to 431 (VALFKIRSNLQKDGTKTDKLE) the chain is on the cytoplasmic side. Residues 432–460 (RLMVKIGVFSVLYTVPATCVIACYFYEIS) traverse the membrane as a helical segment. Residues 461–473 (NWALFRYSADDSN) are Extracellular-facing. A helical membrane pass occupies residues 474–495 (MAVEMLKIFMSLLVGITSGMWI). Topologically, residues 496-537 (WSAKTLHTWQKCSNRLVNSGKVKREKRGNGWVKPGKGNETVV) are cytoplasmic. The short motif at 499–504 (KTLHTW) is the Lys-Thr-X-X-X-Trp motif, mediates interaction with the PDZ domain of Dvl family members element. The PDZ-binding signature appears at 535–537 (TVV).

The protein belongs to the G-protein coupled receptor Fz/Smo family. As to quaternary structure, interacts with MAGI3 and NDP. Component of a complex, at least composed of TSPAN12, FZD4 and norrin (NDP). Interacts (via FZ domain) with TSKU; TSKU competes with WNT2B for binding to FZD4, inhibiting Wnt signaling and repressing peripheral eye development. Interacts with glypican GPC3. Ubiquitinated by ZNRF3, leading to its degradation by the proteasome. In terms of tissue distribution, expressed in chondrocytes.

Its subcellular location is the cell membrane. Its function is as follows. Receptor for Wnt proteins. Most frizzled receptors are coupled to the beta-catenin (CTNNB1) canonical signaling pathway, which leads to the activation of disheveled proteins, inhibition of GSK-3 kinase, nuclear accumulation of beta-catenin (CTNNB1) and activation of Wnt target genes. Plays a critical role in retinal vascularization by acting as a receptor for Wnt proteins and norrin (NDP). In retina, it can be activated by Wnt protein-binding and also by Wnt-independent signaling via binding of norrin (NDP), promoting in both cases beta-catenin (CTNNB1) accumulation and stimulation of LEF/TCF-mediated transcriptional programs. A second signaling pathway involving PKC and calcium fluxes has been seen for some family members, but it is not yet clear if it represents a distinct pathway or if it can be integrated in the canonical pathway, as PKC seems to be required for Wnt-mediated inactivation of GSK-3 kinase. Both pathways seem to involve interactions with G-proteins. May be involved in transduction and intercellular transmission of polarity information during tissue morphogenesis and/or in differentiated tissues. Activation by Wnt5A stimulates PKC activity via a G-protein-dependent mechanism. This chain is Frizzled-4 (Fzd4), found in Mus musculus (Mouse).